A 1470-amino-acid chain; its full sequence is Transient receptor potential cation channel subfamily M member 2 (1470 aa).

At Met-1–Trp-725 the chain is on the cytoplasmic side. ADP-D-ribose-binding positions include Tyr-267, Arg-274, Gly-305–Thr-308, and Arg-330. Residues Lys-726–Tyr-738 lie within the membrane without spanning it. Over Thr-739–Lys-808 the chain is Cytoplasmic. A helical membrane pass occupies residues Phe-809–Ile-829. Residues Asp-830 to Ser-836 are Extracellular-facing. The helical transmembrane segment at Trp-837 to Leu-857 threads the bilayer. Residues Glu-853 and Gln-856 each coordinate Ca(2+). Residues Tyr-858–Asp-876 lie on the Cytoplasmic side of the membrane. A helical transmembrane segment spans residues Leu-877 to Leu-897. Asn-879 is a Ca(2+) binding site. The Extracellular portion of the chain corresponds to Gln-898 to Tyr-905. The helical transmembrane segment at Ile-906–Phe-926 threads the bilayer. Topologically, residues Ser-927–Arg-941 are cytoplasmic. Residues Met-942–Leu-968 traverse the membrane as a helical segment. At Ile-969–Trp-977 the chain is on the extracellular side. The segment at residues Ile-978–Leu-1002 is an intramembrane region (pore-forming). A Selectivity filter motif is present at residues Phe-991–Asn-993. Topologically, residues Phe-1003–Trp-1034 are extracellular. Cys-1008 and Cys-1020 are oxidised to a cystine. N-linked (GlcNAc...) asparagine glycosylation occurs at Asn-1011. A helical transmembrane segment spans residues Leu-1035 to Phe-1059. Residues Asn-1060–Ser-1087 are Cytoplasmic-facing. Glu-1084 contributes to the Ca(2+) binding site. The stretch at Arg-1088–Ile-1105 is an intramembrane region. The Cytoplasmic portion of the chain corresponds to Arg-1106–Phe-1470. Residues His-1157–Phe-1470 form a divergent Nudix hydrolase-like domain region. Disordered regions lie at residues Lys-1215 to Pro-1256 and Pro-1281 to Ala-1314. Over residues Asp-1231–Glu-1244 the composition is skewed to acidic residues. Polar residues predominate over residues Val-1283–Ser-1295. ADP-D-ribose is bound by residues Asp-1398 and Arg-1400.

Belongs to the transient receptor (TC 1.A.4) family. LTrpC subfamily. TRPM2 sub-subfamily. As to quaternary structure, homotetramer.

It is found in the cell membrane. The catalysed reaction is Ca(2+)(in) = Ca(2+)(out). It carries out the reaction Na(+)(in) = Na(+)(out). Activated by intracellular ADP-ribose. Ca(2+) and PI(4,5)P2 are required for channel opening by ADP-ribose. In terms of biological role, nonselective, voltage-independent cation channel that mediates Ca(2+) influx, leading to increased cytoplasmic Ca(2+) levels. Functions as a ligand-gated ion channel, gated by intracellular adenosine diphosphate ribose (ADP-ribose), Ca(2+), warm temperature, and oxidative stress. Binding of ADP-ribose to the cytoplasmic N-terminal region causes a conformation change; the channel is primed but still requires Ca(2+) binding to trigger channel opening. In Danio rerio (Zebrafish), this protein is Transient receptor potential cation channel subfamily M member 2.